Consider the following 457-residue polypeptide: tRNA modification GTPase MnmE (457 aa).

The (6S)-5-formyl-5,6,7,8-tetrahydrofolate site is built by Arg-25, Glu-87, and Arg-126. Residues 223-377 (GISTAIIGRP…IEERINNLFF (155 aa)) form the TrmE-type G domain. Position 233 (Asn-233) interacts with K(+). Residues 233–238 (NVGKSS), 252–258 (TDIAGTT), and 277–280 (DTAG) contribute to the GTP site. Residue Ser-237 participates in Mg(2+) binding. The K(+) site is built by Thr-252, Ile-254, and Thr-257. Position 258 (Thr-258) interacts with Mg(2+). Residue Lys-457 participates in (6S)-5-formyl-5,6,7,8-tetrahydrofolate binding.

This sequence belongs to the TRAFAC class TrmE-Era-EngA-EngB-Septin-like GTPase superfamily. TrmE GTPase family. Homodimer. Heterotetramer of two MnmE and two MnmG subunits. Requires K(+) as cofactor.

The protein localises to the cytoplasm. Exhibits a very high intrinsic GTPase hydrolysis rate. Involved in the addition of a carboxymethylaminomethyl (cmnm) group at the wobble position (U34) of certain tRNAs, forming tRNA-cmnm(5)s(2)U34. This Streptococcus pneumoniae serotype 4 (strain ATCC BAA-334 / TIGR4) protein is tRNA modification GTPase MnmE.